The chain runs to 694 residues: Elongation factor G (694 aa).

The tr-type G domain occupies 8 to 282 (KDYRNIGIMA…AVIDYLPSPV (275 aa)). Residues 17-24 (AHIDAGKT), 81-85 (DTPGH), and 135-138 (NKMD) contribute to the GTP site.

Belongs to the TRAFAC class translation factor GTPase superfamily. Classic translation factor GTPase family. EF-G/EF-2 subfamily.

The protein localises to the cytoplasm. Functionally, catalyzes the GTP-dependent ribosomal translocation step during translation elongation. During this step, the ribosome changes from the pre-translocational (PRE) to the post-translocational (POST) state as the newly formed A-site-bound peptidyl-tRNA and P-site-bound deacylated tRNA move to the P and E sites, respectively. Catalyzes the coordinated movement of the two tRNA molecules, the mRNA and conformational changes in the ribosome. This chain is Elongation factor G, found in Mesomycoplasma hyopneumoniae (strain J / ATCC 25934 / NCTC 10110) (Mycoplasma hyopneumoniae).